The following is a 102-amino-acid chain: Small ribosomal subunit protein uS10 (102 aa).

The protein belongs to the universal ribosomal protein uS10 family. As to quaternary structure, part of the 30S ribosomal subunit.

Involved in the binding of tRNA to the ribosomes. This is Small ribosomal subunit protein uS10 from Staphylococcus aureus (strain JH9).